Reading from the N-terminus, the 353-residue chain is Mannonate dehydratase (353 aa).

Belongs to the mannonate dehydratase family. Fe(2+) is required as a cofactor. The cofactor is Mn(2+).

It carries out the reaction D-mannonate = 2-dehydro-3-deoxy-D-gluconate + H2O. It functions in the pathway carbohydrate metabolism; pentose and glucuronate interconversion. Catalyzes the dehydration of D-mannonate. The sequence is that of Mannonate dehydratase from Burkholderia cenocepacia (strain ATCC BAA-245 / DSM 16553 / LMG 16656 / NCTC 13227 / J2315 / CF5610) (Burkholderia cepacia (strain J2315)).